The chain runs to 147 residues: 3-hydroxyacyl-[acyl-carrier-protein] dehydratase FabZ (147 aa).

His49 is an active-site residue.

Belongs to the thioester dehydratase family. FabZ subfamily.

The protein localises to the cytoplasm. It catalyses the reaction a (3R)-hydroxyacyl-[ACP] = a (2E)-enoyl-[ACP] + H2O. Functionally, involved in unsaturated fatty acids biosynthesis. Catalyzes the dehydration of short chain beta-hydroxyacyl-ACPs and long chain saturated and unsaturated beta-hydroxyacyl-ACPs. In Syntrophotalea carbinolica (strain DSM 2380 / NBRC 103641 / GraBd1) (Pelobacter carbinolicus), this protein is 3-hydroxyacyl-[acyl-carrier-protein] dehydratase FabZ.